The sequence spans 1080 residues: Ubiquitin carboxyl-terminal hydrolase 8 (1080 aa).

The MIT domain occupies 33 to 116; sequence TKNYIHSAQK…ESLKLRYEEA (84 aa). Residues 119-173 are compositionally biased toward basic and acidic residues; it reads RKQLEEKDRREEEQLQQQKRQEMGREDSGAAAKRSVENLLDSKTKTQRINGEKSE. Residues 119-176 are disordered; the sequence is RKQLEEKDRREEEQLQQQKRQEMGREDSGAAAKRSVENLLDSKTKTQRINGEKSEGAA. The residue at position 160 (serine 160) is a Phosphoserine. Positions 195 to 313 constitute a Rhodanese domain; that stretch reads KNTSLIIMDA…WLLCYPQFTT (119 aa). Residues 379-393 show a composition bias toward low complexity; sequence ALAGPGAAPRAEASP. Disordered stretches follow at residues 379-455, 468-605, and 642-710; these read ALAG…TDEE, EKNK…RSEE, and PPEM…KPPC. Serine 392 bears the Phosphoserine mark. An SH3-binding motif is present at residues 405-413; that stretch reads PQVDRTKKP. A compositionally biased stretch (basic and acidic residues) spans 417 to 427; the sequence is LPEDHRIKSEN. Position 446 is a phosphoserine (serine 446). 3 stretches are compositionally biased toward basic and acidic residues: residues 468–535, 549–577, and 593–605; these read EKNK…RELS, SKSE…KRPA, and AQRE…RSEE. Threonine 569 carries the phosphothreonine modification. Positions 678-688 are enriched in polar residues; the sequence is SYSSPDITQAL. Phosphoserine occurs at positions 680 and 681. A USP domain is found at 739–1071; sequence TGLRNLGNTC…AAYILFYTSL (333 aa). Cysteine 748 acts as the Nucleophile in catalysis. Threonine 907 carries the post-translational modification Phosphothreonine. Histidine 1029 serves as the catalytic Proton acceptor.

Belongs to the peptidase C19 family. Forms a ternary complex with RNF128 and OTUB1. Interacts (via C-terminal UCH catalytic domain) with OTUB1 isoform 1. Interacts with STAM2 (via SH3 domain). Interacts with DNAJB3, EGFR, EPS15, RASGRF1, RNF41, YWHAE, YWHAG and YWHAZ. Interacts with NBR1, RASGRF1, RNF41 and IST1. Associates with the ESCRT-0 complex and with microtubules. Interacts with BIRC6/bruce and KIF23/MKLP1. In terms of processing, phosphorylation of Ser-680 is essential for interaction with YWHAE and for cytosol localization. Undergoes dephosphorylation at Ser-680 in the M phase. Tyrosine-phosphorylated in its N-terminal half in an EGFR-dependent manner. Post-translationally, ubiquitinated. Inactive form is mostly monoubiquitinated, but polyubiquitination happens too. Ubiquitination is increased in EGF-stimulated cells. Ubiquitination of active form is undetectable, suggesting a possibility that USP8 deubiquitinates itself, thereby regulating its own function. As to expression, highly expressed in testis. Expressed at intermediate level in brain.

The protein resides in the cytoplasm. The protein localises to the nucleus. Its subcellular location is the endosome membrane. It is found in the cell membrane. It catalyses the reaction Thiol-dependent hydrolysis of ester, thioester, amide, peptide and isopeptide bonds formed by the C-terminal Gly of ubiquitin (a 76-residue protein attached to proteins as an intracellular targeting signal).. In terms of biological role, hydrolase that can remove conjugated ubiquitin from proteins and therefore plays an important regulatory role at the level of protein turnover by preventing degradation. Converts both 'Lys-48' an 'Lys-63'-linked ubiquitin chains. Catalytic activity is enhanced in the M phase. Involved in cell proliferation. Required to enter into S phase in response to serum stimulation. May regulate T-cell anergy mediated by RNF128 via the formation of a complex containing RNF128 and OTUB1. Probably regulates the stability of STAM2 and RASGRF1. Regulates endosomal ubiquitin dynamics, cargo sorting, membrane traffic at early endosomes, and maintenance of ESCRT-0 stability. The level of protein ubiquitination on endosomes is essential for maintaining the morphology of the organelle. Deubiquitinates EPS15 and controls tyrosine kinase stability. Removes conjugated ubiquitin from EGFR thus regulating EGFR degradation and downstream MAPK signaling. Involved in acrosome biogenesis through interaction with the spermatid ESCRT-0 complex and microtubules. Deubiquitinates BIRC6/bruce and KIF23/MKLP1. Deubiquitinates BACE1 which inhibits BACE1 lysosomal degradation and modulates BACE-mediated APP cleavage and amyloid-beta formation. In Mus musculus (Mouse), this protein is Ubiquitin carboxyl-terminal hydrolase 8.